The chain runs to 344 residues: DNA-directed RNA polymerase subunit alpha (344 aa).

An alpha N-terminal domain (alpha-NTD) region spans residues 1 to 238 (MKVIKTAPLI…KQLGVFGERP (238 aa)). The segment at 254–344 (AKDLSAKIES…EKLEDKGGND (91 aa)) is alpha C-terminal domain (alpha-CTD).

It belongs to the RNA polymerase alpha chain family. As to quaternary structure, homodimer. The RNAP catalytic core consists of 2 alpha, 1 beta, 1 beta' and 1 omega subunit. When a sigma factor is associated with the core the holoenzyme is formed, which can initiate transcription.

The catalysed reaction is RNA(n) + a ribonucleoside 5'-triphosphate = RNA(n+1) + diphosphate. In terms of biological role, DNA-dependent RNA polymerase catalyzes the transcription of DNA into RNA using the four ribonucleoside triphosphates as substrates. The sequence is that of DNA-directed RNA polymerase subunit alpha from Helicobacter pylori (strain J99 / ATCC 700824) (Campylobacter pylori J99).